The chain runs to 355 residues: RNA 3'-terminal phosphate cyclase (355 aa).

Residues Q100 and 300–304 (HLADQ) contribute to the ATP site. Residue H325 is the Tele-AMP-histidine intermediate of the active site.

The protein belongs to the RNA 3'-terminal cyclase family. Type 1 subfamily.

The protein resides in the cytoplasm. The catalysed reaction is a 3'-end 3'-phospho-ribonucleotide-RNA + ATP = a 3'-end 2',3'-cyclophospho-ribonucleotide-RNA + AMP + diphosphate. Functionally, catalyzes the conversion of 3'-phosphate to a 2',3'-cyclic phosphodiester at the end of RNA. The mechanism of action of the enzyme occurs in 3 steps: (A) adenylation of the enzyme by ATP; (B) transfer of adenylate to an RNA-N3'P to produce RNA-N3'PP5'A; (C) and attack of the adjacent 2'-hydroxyl on the 3'-phosphorus in the diester linkage to produce the cyclic end product. The biological role of this enzyme is unknown but it is likely to function in some aspects of cellular RNA processing. This is RNA 3'-terminal phosphate cyclase from Methanosarcina acetivorans (strain ATCC 35395 / DSM 2834 / JCM 12185 / C2A).